We begin with the raw amino-acid sequence, 256 residues long: Thiazole synthase (256 aa).

Lysine 98 acts as the Schiff-base intermediate with DXP in catalysis. 1-deoxy-D-xylulose 5-phosphate contacts are provided by residues glycine 159, 185-186 (AG), and 207-208 (NT).

This sequence belongs to the ThiG family. Homotetramer. Forms heterodimers with either ThiH or ThiS.

Its subcellular location is the cytoplasm. It carries out the reaction [ThiS sulfur-carrier protein]-C-terminal-Gly-aminoethanethioate + 2-iminoacetate + 1-deoxy-D-xylulose 5-phosphate = [ThiS sulfur-carrier protein]-C-terminal Gly-Gly + 2-[(2R,5Z)-2-carboxy-4-methylthiazol-5(2H)-ylidene]ethyl phosphate + 2 H2O + H(+). It functions in the pathway cofactor biosynthesis; thiamine diphosphate biosynthesis. In terms of biological role, catalyzes the rearrangement of 1-deoxy-D-xylulose 5-phosphate (DXP) to produce the thiazole phosphate moiety of thiamine. Sulfur is provided by the thiocarboxylate moiety of the carrier protein ThiS. In vitro, sulfur can be provided by H(2)S. The polypeptide is Thiazole synthase (Aliivibrio salmonicida (strain LFI1238) (Vibrio salmonicida (strain LFI1238))).